We begin with the raw amino-acid sequence, 229 residues long: Putative N-acetylmannosamine-6-phosphate 2-epimerase (229 aa).

Belongs to the NanE family.

The enzyme catalyses an N-acyl-D-glucosamine 6-phosphate = an N-acyl-D-mannosamine 6-phosphate. Its pathway is amino-sugar metabolism; N-acetylneuraminate degradation; D-fructose 6-phosphate from N-acetylneuraminate: step 3/5. Converts N-acetylmannosamine-6-phosphate (ManNAc-6-P) to N-acetylglucosamine-6-phosphate (GlcNAc-6-P). The polypeptide is Putative N-acetylmannosamine-6-phosphate 2-epimerase (Escherichia coli O139:H28 (strain E24377A / ETEC)).